The primary structure comprises 472 residues: Glycine--tRNA ligase (472 aa).

The substrate site is built by arginine 109 and glutamate 174. ATP contacts are provided by residues 206–208 (RNE), 216–221 (FRTREF), 293–294 (EL), and 337–340 (GLTR). 221–225 (FEQME) contacts substrate. A substrate-binding site is contributed by 333-337 (EPAAG).

It belongs to the class-II aminoacyl-tRNA synthetase family. As to quaternary structure, homodimer.

It localises to the cytoplasm. The catalysed reaction is tRNA(Gly) + glycine + ATP = glycyl-tRNA(Gly) + AMP + diphosphate. Functionally, catalyzes the attachment of glycine to tRNA(Gly). The chain is Glycine--tRNA ligase from Cutibacterium acnes (strain DSM 16379 / KPA171202) (Propionibacterium acnes).